We begin with the raw amino-acid sequence, 468 residues long: Cysteine--tRNA ligase (468 aa).

Position 29 (cysteine 29) interacts with Zn(2+). Positions 31–41 (PTVYNYIHIGN) match the 'HIGH' region motif. Cysteine 209, histidine 234, and glutamate 238 together coordinate Zn(2+). The 'KMSKS' region motif lies at 266–270 (KMSKS). An ATP-binding site is contributed by lysine 269. Phosphoserine is present on serine 270.

The protein belongs to the class-I aminoacyl-tRNA synthetase family. In terms of assembly, monomer. Requires Zn(2+) as cofactor.

The protein localises to the cytoplasm. The enzyme catalyses tRNA(Cys) + L-cysteine + ATP = L-cysteinyl-tRNA(Cys) + AMP + diphosphate. This chain is Cysteine--tRNA ligase, found in Oceanobacillus iheyensis (strain DSM 14371 / CIP 107618 / JCM 11309 / KCTC 3954 / HTE831).